The sequence spans 351 residues: MAASSASTSAIQQRVWQGRIPLQIVLSPSECRIYDQSDPYIISIPRLSYLPFILPRLFSFFSSSLIDPDVQAHDGWFSFEGVPLKWHYPVGLLYDLYAGAEPITSKSLSSPGSEREHYVRGGTRENISESGAEGEKDDNHGHDHEFKRDALPWRLMVHFHDWPEQDLIRLDPEGKILHDAFINSVKEADCLRNGTAKRIMALSKEDSSGLWKSVEEHNLPAYHRIHNTLLLPTPPTPFRNIPIRIFLPAPPDSPSPSLKVIQSPIPPLIQPTASPSSSISSASRQMQPQVQTIGTALNSLLPSLFPSKRTPMLAKPVLHGAVVPMSAPVEEVVKCAGYADGWLGVVVSMVG.

The segment at 106-143 is disordered; that stretch reads KSLSSPGSEREHYVRGGTRENISESGAEGEKDDNHGHD. The segment covering 113-143 has biased composition (basic and acidic residues); it reads SEREHYVRGGTRENISESGAEGEKDDNHGHD. Lysine 186 is covalently cross-linked (Glycyl lysine isopeptide (Lys-Gly) (interchain with G-Cter in ATG12)).

This sequence belongs to the ATG5 family. Conjugated with ATG12. Conjugated to ATG12; which is essential for autophagy.

Its subcellular location is the preautophagosomal structure membrane. Functionally, involved in cytoplasm to vacuole transport (Cvt) and autophagic vesicle formation. Autophagy is essential for maintenance of amino acid levels and protein synthesis under nitrogen starvation. Required for selective autophagic degradation of the nucleus (nucleophagy). Also required for mitophagy, which eliminates defective or superfluous mitochondria in order to fulfill cellular energy requirements and prevent excess ROS production. Conjugation with ATG12, through a ubiquitin-like conjugating system involving ATG7 as an E1-like activating enzyme and ATG10 as an E2-like conjugating enzyme, is essential for its function. The ATG12-ATG5 conjugate acts as an E3-like enzyme which is required for lipidation of ATG8 and ATG8 association to the vesicle membranes. This chain is Autophagy protein 5 (ATG5), found in Coccidioides immitis (strain RS) (Valley fever fungus).